A 101-amino-acid polypeptide reads, in one-letter code: MIPGEIIPVQGDIELNKGLPTVTLKVANSGDRPIQVGSHYHFFETNEGLKFDREQTRGMRLDIAAGTAMRFEPGQERDVTLVPLGGKREVYGFQQKVMGKL.

It belongs to the urease beta subunit family. Heterotrimer of UreA (gamma), UreB (beta) and UreC (alpha) subunits. Three heterotrimers associate to form the active enzyme.

It is found in the cytoplasm. The catalysed reaction is urea + 2 H2O + H(+) = hydrogencarbonate + 2 NH4(+). Its pathway is nitrogen metabolism; urea degradation; CO(2) and NH(3) from urea (urease route): step 1/1. In Mesorhizobium japonicum (strain LMG 29417 / CECT 9101 / MAFF 303099) (Mesorhizobium loti (strain MAFF 303099)), this protein is Urease subunit beta.